A 252-amino-acid polypeptide reads, in one-letter code: Transcriptional regulatory protein HptR (252 aa).

A Response regulatory domain is found at 3 to 118 (KVVICDDERI…QLEVILGRLV (116 aa)). Asp-55 is modified (4-aspartylphosphate). Positions 153-250 (NQIVDQIKQS…QMSPSDYCKQ (98 aa)) constitute an HTH araC/xylS-type domain. 2 DNA-binding regions (H-T-H motif) span residues 170–191 (SDLI…KDHV) and 217–240 (HYEI…KKYL).

In terms of processing, phosphorylated by HptS.

Its subcellular location is the cytoplasm. In terms of biological role, member of the two-component regulatory system HptS/HptR that regulates genes involved in hexose phosphate transport system in response to changes in extracellular phosphate sources. Activates uhpT expression to facilitate glucose-6-phosphate/G6P utilization by directly binding to its promoter. Antagonizes CcpA-dependent transcription of a subset of CcpA-regulated genes involved in antibiotic susceptibility. The polypeptide is Transcriptional regulatory protein HptR (hptR) (Staphylococcus aureus (strain NCTC 8325 / PS 47)).